Reading from the N-terminus, the 264-residue chain is Elongation factor Ts (264 aa).

Residues 76-79 are involved in Mg(2+) ion dislocation from EF-Tu; that stretch reads TDFV.

Belongs to the EF-Ts family.

The protein resides in the cytoplasm. In terms of biological role, associates with the EF-Tu.GDP complex and induces the exchange of GDP to GTP. It remains bound to the aminoacyl-tRNA.EF-Tu.GTP complex up to the GTP hydrolysis stage on the ribosome. In Deinococcus radiodurans (strain ATCC 13939 / DSM 20539 / JCM 16871 / CCUG 27074 / LMG 4051 / NBRC 15346 / NCIMB 9279 / VKM B-1422 / R1), this protein is Elongation factor Ts.